We begin with the raw amino-acid sequence, 493 residues long: Probable mannosyl-oligosaccharide alpha-1,2-mannosidase 1B (493 aa).

Residues 1–18 (MHLPSLSVALALVSSSLA) form the signal peptide. Residues Asn87 and Asn174 are each glycosylated (N-linked (GlcNAc...) asparagine). A disulfide bridge connects residues Cys324 and Cys353. Catalysis depends on Glu367, which acts as the Proton donor. An N-linked (GlcNAc...) asparagine glycan is attached at Asn489.

It belongs to the glycosyl hydrolase 47 family. As to quaternary structure, monomer. It depends on Ca(2+) as a cofactor. Requires Mg(2+) as cofactor.

Its subcellular location is the cytoplasmic vesicle lumen. The enzyme catalyses N(4)-(alpha-D-Man-(1-&gt;2)-alpha-D-Man-(1-&gt;2)-alpha-D-Man-(1-&gt;3)-[alpha-D-Man-(1-&gt;2)-alpha-D-Man-(1-&gt;3)-[alpha-D-Man-(1-&gt;2)-alpha-D-Man-(1-&gt;6)]-alpha-D-Man-(1-&gt;6)]-beta-D-Man-(1-&gt;4)-beta-D-GlcNAc-(1-&gt;4)-beta-D-GlcNAc)-L-asparaginyl-[protein] (N-glucan mannose isomer 9A1,2,3B1,2,3) + 4 H2O = N(4)-(alpha-D-Man-(1-&gt;3)-[alpha-D-Man-(1-&gt;3)-[alpha-D-Man-(1-&gt;6)]-alpha-D-Man-(1-&gt;6)]-beta-D-Man-(1-&gt;4)-beta-D-GlcNAc-(1-&gt;4)-beta-D-GlcNAc)-L-asparaginyl-[protein] (N-glucan mannose isomer 5A1,2) + 4 beta-D-mannose. It carries out the reaction N(4)-(alpha-D-Man-(1-&gt;2)-alpha-D-Man-(1-&gt;2)-alpha-D-Man-(1-&gt;3)-[alpha-D-Man-(1-&gt;3)-[alpha-D-Man-(1-&gt;2)-alpha-D-Man-(1-&gt;6)]-alpha-D-Man-(1-&gt;6)]-beta-D-Man-(1-&gt;4)-beta-D-GlcNAc-(1-&gt;4)-beta-D-GlcNAc)-L-asparaginyl-[protein] (N-glucan mannose isomer 8A1,2,3B1,3) + 3 H2O = N(4)-(alpha-D-Man-(1-&gt;3)-[alpha-D-Man-(1-&gt;3)-[alpha-D-Man-(1-&gt;6)]-alpha-D-Man-(1-&gt;6)]-beta-D-Man-(1-&gt;4)-beta-D-GlcNAc-(1-&gt;4)-beta-D-GlcNAc)-L-asparaginyl-[protein] (N-glucan mannose isomer 5A1,2) + 3 beta-D-mannose. It functions in the pathway protein modification; protein glycosylation. Its function is as follows. Involved in the maturation of Asn-linked oligosaccharides. Progressively trims alpha-1,2-linked mannose residues from Man(9)GlcNAc(2) to produce Man(5)GlcNAc(2). This is Probable mannosyl-oligosaccharide alpha-1,2-mannosidase 1B (mns1B) from Aspergillus fumigatus (strain CBS 144.89 / FGSC A1163 / CEA10) (Neosartorya fumigata).